A 247-amino-acid chain; its full sequence is uncharacterized protein (247 aa).

Residues Lys161 to Glu187 form a disordered region. The segment covering Thr172–Glu187 has biased composition (basic and acidic residues).

This is an uncharacterized protein from Mus musculus (Mouse).